Consider the following 173-residue polypeptide: Photosystem I assembly protein Ycf3 (173 aa).

TPR repeat units lie at residues 35 to 68 (AFAYYRDGMSAQADGEYAEALENYQAALELEEDP), 72 to 105 (SYILYNIGLIHASNGEHEKALEYYHQALELNPRM), and 113 to 146 (AVIYHYLGTQAEEQQRLEEAEQFFDRAADYWKRA).

It belongs to the Ycf3 family.

The protein resides in the cellular thylakoid membrane. Essential for the assembly of the photosystem I (PSI) complex. May act as a chaperone-like factor to guide the assembly of the PSI subunits. This is Photosystem I assembly protein Ycf3 from Thermosynechococcus vestitus (strain NIES-2133 / IAM M-273 / BP-1).